The chain runs to 76 residues: uORF2 protein (76 aa).

Its function is as follows. Plays a role in viral replication. This Zika virus (isolate ZIKV/Human/French Polynesia/10087PF/2013) (ZIKV) protein is uORF2 protein.